We begin with the raw amino-acid sequence, 167 residues long: Endoribonuclease YbeY (167 aa).

Positions 131, 135, and 141 each coordinate Zn(2+).

It belongs to the endoribonuclease YbeY family. Requires Zn(2+) as cofactor.

It is found in the cytoplasm. Its function is as follows. Single strand-specific metallo-endoribonuclease involved in late-stage 70S ribosome quality control and in maturation of the 3' terminus of the 16S rRNA. This is Endoribonuclease YbeY from Rickettsia akari (strain Hartford).